A 264-amino-acid polypeptide reads, in one-letter code: Tryptophan synthase alpha chain (264 aa).

Catalysis depends on proton acceptor residues glutamate 49 and aspartate 60.

This sequence belongs to the TrpA family. As to quaternary structure, tetramer of two alpha and two beta chains.

It carries out the reaction (1S,2R)-1-C-(indol-3-yl)glycerol 3-phosphate + L-serine = D-glyceraldehyde 3-phosphate + L-tryptophan + H2O. It functions in the pathway amino-acid biosynthesis; L-tryptophan biosynthesis; L-tryptophan from chorismate: step 5/5. Functionally, the alpha subunit is responsible for the aldol cleavage of indoleglycerol phosphate to indole and glyceraldehyde 3-phosphate. This chain is Tryptophan synthase alpha chain, found in Lachnospira eligens (strain ATCC 27750 / DSM 3376 / VPI C15-48 / C15-B4) (Eubacterium eligens).